Here is a 415-residue protein sequence, read N- to C-terminus: E3 ubiquitin-protein ligase RNF135 (415 aa).

An RING-type zinc finger spans residues 21 to 67; sequence CIICQGLLDWPTTLPCGHSFCLQCLKDLWVSKRAGVDSCPWACPICR. Residues 181–206 are a coiled coil; sequence TFSASQKKIQEILRDLEKIQETLQGS. In terms of domain architecture, B30.2/SPRY spans 228–415; that stretch reads PDQRYPVSRK…LTPGNYLEIL (188 aa).

As to quaternary structure, homodimer. Interacts (homodimer) with RIGI (double-stranded RNA-bound oligomeric form); involved in both RIGI ubiquitination, oligomerization into filaments associated with viral RNAs and the bridging of these filaments. Interacts with UBE2D3 and UBE2N; E2 ubiquitin ligases involved in RNF135-mediated ubiquitination of RIGI and activation of the RIG-I signaling pathway. Interacts with PCBP2.

The protein localises to the cytoplasm. It localises to the stress granule. The catalysed reaction is S-ubiquitinyl-[E2 ubiquitin-conjugating enzyme]-L-cysteine + [acceptor protein]-L-lysine = [E2 ubiquitin-conjugating enzyme]-L-cysteine + N(6)-ubiquitinyl-[acceptor protein]-L-lysine.. It functions in the pathway protein modification; protein ubiquitination. In terms of biological role, E2-dependent E3 ubiquitin-protein ligase that functions as a RIGI coreceptor in the sensing of viral RNAs in cell cytoplasm and the activation of the antiviral innate immune response. Together with the UBE2D3, UBE2N and UB2V1 E2 ligases, catalyzes the 'Lys-63'-linked polyubiquitination of RIGI oligomerized on viral RNAs, an essential step in the activation of the RIG-I signaling pathway. Through a ubiquitin-independent parallel mechanism, which consists in bridging RIGI filaments forming on longer viral RNAs, further activates the RIG-I signaling pathway. This second mechanism that synergizes with the ubiquitin-dependent one would thereby allow an RNA length-dependent regulation of the RIG-I signaling pathway. Associated with the E2 ligase UBE2N, also constitutively synthesizes unanchored 'Lys-63'-linked polyubiquitin chains that may also activate the RIG-I signaling pathway. The polypeptide is E3 ubiquitin-protein ligase RNF135 (Rattus norvegicus (Rat)).